A 692-amino-acid chain; its full sequence is Putative receptor-like protein kinase At1g80870 (692 aa).

A helical membrane pass occupies residues 20-40; that stretch reads LFLILTISSSLVIFFAILYFI. The 593-residue stretch at 81–673 folds into the Protein kinase domain; that stretch reads FDESNVIGKG…GEMDISSTAF (593 aa). Residues 87 to 95 and lysine 109 contribute to the ATP site; that span reads IGKGGSGTV. Aspartate 206 functions as the Proton acceptor in the catalytic mechanism. Disordered regions lie at residues 427 to 446 and 511 to 533; these read EISERKNKRSKNKKKKHRNM and RRKSNSSSKKKKKNNNGSMGSEM. Composition is skewed to basic residues over residues 432–444 and 511–524; these read KNKRSKNKKKKHR and RRKSNSSSKKKKKN.

It belongs to the protein kinase superfamily. Ser/Thr protein kinase family.

It is found in the cell membrane. It catalyses the reaction L-seryl-[protein] + ATP = O-phospho-L-seryl-[protein] + ADP + H(+). It carries out the reaction L-threonyl-[protein] + ATP = O-phospho-L-threonyl-[protein] + ADP + H(+). In Arabidopsis thaliana (Mouse-ear cress), this protein is Putative receptor-like protein kinase At1g80870.